Here is a 685-residue protein sequence, read N- to C-terminus: Heat shock protein homolog SSE1 (685 aa).

The disordered stretch occupies residues 651 to 685 (QALRSNQEASKMADLSAKLAAQRKAEAEAKENAKE). Positions 673–685 (RKAEAEAKENAKE) are enriched in basic and acidic residues.

The protein belongs to the heat shock protein 70 family.

The protein resides in the cytoplasm. The protein is Heat shock protein homolog SSE1 (SSE1) of Naumovozyma castellii (Yeast).